Here is a 258-residue protein sequence, read N- to C-terminus: 6-phosphogluconolactonase (258 aa).

It belongs to the glucosamine/galactosamine-6-phosphate isomerase family. 6-phosphogluconolactonase subfamily.

The catalysed reaction is 6-phospho-D-glucono-1,5-lactone + H2O = 6-phospho-D-gluconate + H(+). It functions in the pathway carbohydrate degradation; pentose phosphate pathway; D-ribulose 5-phosphate from D-glucose 6-phosphate (oxidative stage): step 2/3. Hydrolysis of 6-phosphogluconolactone to 6-phosphogluconate. The polypeptide is 6-phosphogluconolactonase (pgl) (Chlamydia pneumoniae (Chlamydophila pneumoniae)).